The chain runs to 297 residues: 4-hydroxy-tetrahydrodipicolinate synthase (297 aa).

Position 49 (T49) interacts with pyruvate. The Proton donor/acceptor role is filled by Y137. K166 acts as the Schiff-base intermediate with substrate in catalysis. I208 contributes to the pyruvate binding site.

Belongs to the DapA family. Homotetramer; dimer of dimers.

It is found in the cytoplasm. The enzyme catalyses L-aspartate 4-semialdehyde + pyruvate = (2S,4S)-4-hydroxy-2,3,4,5-tetrahydrodipicolinate + H2O + H(+). It functions in the pathway amino-acid biosynthesis; L-lysine biosynthesis via DAP pathway; (S)-tetrahydrodipicolinate from L-aspartate: step 3/4. In terms of biological role, catalyzes the condensation of (S)-aspartate-beta-semialdehyde [(S)-ASA] and pyruvate to 4-hydroxy-tetrahydrodipicolinate (HTPA). The protein is 4-hydroxy-tetrahydrodipicolinate synthase of Parabacteroides distasonis (strain ATCC 8503 / DSM 20701 / CIP 104284 / JCM 5825 / NCTC 11152).